Consider the following 484-residue polypeptide: Pentatricopeptide repeat-containing protein At1g09190 (484 aa).

10 PPR repeats span residues 66 to 100, 101 to 135, 136 to 166, 167 to 197, 198 to 232, 233 to 267, 269 to 299, 300 to 334, 336 to 366, and 372 to 406; these read NVLVFNAMIKCYSLVGPPLESLSFFSSMKSRGIWA, DEYTYAPLLKSCSSLSDLRFGKCVHGELIRTGFHR, LGKIRIGVVELYTSGGRMGDAQKVFDEMSER, NVVVWNLMIRGFCDSGDVERGLHLFKQMSER, SIVSWNSMISSLSKCGRDREALELFCEMIDQGFDP, DEATVVTVLPISASLGVLDTGKWIHSTAESSGLFK, FITVGNALVDFYCKSGDLEAATAIFRKMQRR, NVVSWNTLISGSAVNGKGEFGIDLFDAMIEEGKVA, NEATFLGVLACCSYTGQVERGEELFGLMMER, and RTEHYGAMVDLMSRSGRITEAFKFLKNMPVNANAA. The segment at 407-482 is type E motif; that stretch reads MWGSLLSACR…STGQSTICDV (76 aa).

Belongs to the PPR family. PCMP-E subfamily.

The polypeptide is Pentatricopeptide repeat-containing protein At1g09190 (PCMP-E70) (Arabidopsis thaliana (Mouse-ear cress)).